The chain runs to 89 residues: Phytosulfokines 1 (89 aa).

Residues 1 to 22 (MVNPGRTARALCLLCLALLLLG) form the signal peptide. The propeptide occupies 23–79 (QDTHSRKLLLQEKHSHGVGNGTTTTQEPSRENGGSTGSNNNGQLQFDSAKWEEFHTD). Residues 33-70 (QEKHSHGVGNGTTTTQEPSRENGGSTGSNNNGQLQFDS) are disordered. N-linked (GlcNAc...) asparagine glycosylation is present at Asn-42. 2 positions are modified to sulfotyrosine: Tyr-80 and Tyr-82. Positions 85-89 (DVKKP) are excised as a propeptide.

This sequence belongs to the phytosulfokine family. In terms of processing, sulfation is important for activity and for the binding to a putative membrane receptor. Post-translationally, PSK-alpha is produced by endopeptidase digestion. PSK-beta is produced from PSK-alpha by exopeptidase digestion. As to expression, expressed throughout the seedling. More abundant in fragments containing shoot or root apexes where cells proliferate vigorously.

It is found in the secreted. Functionally, promotes plant cell differentiation, organogenesis and somatic embryogenesis as well as cell proliferation. In Oryza sativa subsp. japonica (Rice), this protein is Phytosulfokines 1 (PSK1).